A 443-amino-acid chain; its full sequence is Ribosomal protein uS12 methylthiotransferase RimO (443 aa).

Residues 1-116 enclose the MTTase N-terminal domain; the sequence is MKFHLISLGC…IAEYVGKLIA (116 aa). [4Fe-4S] cluster contacts are provided by C10, C45, C79, C154, C158, and C161. Residues 140 to 370 form the Radical SAM core domain; the sequence is STPFFRAWVK…LELQQELSTE (231 aa). The TRAM domain maps to 373 to 441; it reads KKYVGTVQKV…QYDLVGGVVS (69 aa).

It belongs to the methylthiotransferase family. RimO subfamily. The cofactor is [4Fe-4S] cluster.

The protein resides in the cytoplasm. The enzyme catalyses L-aspartate(89)-[ribosomal protein uS12]-hydrogen + (sulfur carrier)-SH + AH2 + 2 S-adenosyl-L-methionine = 3-methylsulfanyl-L-aspartate(89)-[ribosomal protein uS12]-hydrogen + (sulfur carrier)-H + 5'-deoxyadenosine + L-methionine + A + S-adenosyl-L-homocysteine + 2 H(+). Functionally, catalyzes the methylthiolation of an aspartic acid residue of ribosomal protein uS12. This chain is Ribosomal protein uS12 methylthiotransferase RimO, found in Desulfotalea psychrophila (strain LSv54 / DSM 12343).